We begin with the raw amino-acid sequence, 210 residues long: Ribosomal RNA small subunit methyltransferase G (210 aa).

Residues glycine 76, leucine 81, valine 127–glutamate 128, and arginine 142 contribute to the S-adenosyl-L-methionine site.

The protein belongs to the methyltransferase superfamily. RNA methyltransferase RsmG family.

It localises to the cytoplasm. The enzyme catalyses guanosine(527) in 16S rRNA + S-adenosyl-L-methionine = N(7)-methylguanosine(527) in 16S rRNA + S-adenosyl-L-homocysteine. Functionally, specifically methylates the N7 position of guanine in position 527 of 16S rRNA. The chain is Ribosomal RNA small subunit methyltransferase G from Aliivibrio fischeri (strain ATCC 700601 / ES114) (Vibrio fischeri).